Here is a 907-residue protein sequence, read N- to C-terminus: Cytochrome b561, DM13 and DOMON domain-containing protein At5g54830 (907 aa).

Residues 1–24 (MCDQRPNLLGSLVLLGFFIFFVNG) form the signal peptide. The region spanning 31 to 139 (SSLIGHESEF…ASDFGHVLLS (109 aa)) is the DM13 domain. A disordered region spans residues 144–172 (SDTSKAESPPSESNDVAPGKSNNSEPFKA). Polar residues predominate over residues 153 to 168 (PSESNDVAPGKSNNSE). DOMON domains lie at 184–329 (DKYR…WALG) and 524–645 (QQVK…WAMG). The region spanning 653–850 (LTERNMHSVT…CVVTVAYLEY (198 aa)) is the Cytochrome b561 domain. A helical membrane pass occupies residues 685 to 705 (VLGVHGFMMFLAWGILLPGGI). Residues His689 and His723 each contribute to the heme b site. The next 4 helical transmembrane spans lie at 730–750 (GLAIVFLGLLFAVAELNGFSF), 754–774 (HVKFGFTAIVLACAQPVNAWL), 795–815 (SHSIVGQSAVVVGVVALFTGM), and 829–849 (GLNLALGLWVFLCVVTVAYLE). Residues His754 and His796 each coordinate heme b. Residues 884-897 (GGFRDKDDEDRNGG) show a composition bias toward basic and acidic residues. The tract at residues 884–907 (GGFRDKDDEDRNGGRMEIQLEPLK) is disordered.

Heme b serves as cofactor.

It localises to the membrane. May act as a catecholamine-responsive trans-membrane electron transporter. This is Cytochrome b561, DM13 and DOMON domain-containing protein At5g54830 from Arabidopsis thaliana (Mouse-ear cress).